The chain runs to 496 residues: 7,8-epoxymelianol synthase CYP88A154 (496 aa).

Residues 11 to 31 form a helical membrane-spanning segment; the sequence is FNFLWLILAIFVGTYVVLFGF. Cysteine 444 is a binding site for heme.

Belongs to the cytochrome P450 family. Requires heme as cofactor.

The protein resides in the membrane. The enzyme catalyses melianol + reduced [NADPH--hemoprotein reductase] + O2 = 7,8-epoxymelianol + oxidized [NADPH--hemoprotein reductase] + H2O + H(+). It functions in the pathway secondary metabolite biosynthesis; terpenoid biosynthesis. In terms of biological role, monooxygenase involved in the biosynthesis of glabretanes, limonoids and quassinoids triterpene natural products such as ailanthone, chaparrinone, glaucarubinone and amarolide, allelopathic degraded triterpene lactones inhibiting the growth of other plants, and possessing antimalarial, antifeedant, insecticidal, anti-inflammatory and anticancer activities. Catalyzes the epoxidation of melianol to produce 7,8-epoxymelianol. The chain is 7,8-epoxymelianol synthase CYP88A154 from Ailanthus altissima (Tree-of-heaven).